The chain runs to 275 residues: uncharacterized protein (275 aa).

The protein belongs to the SMP-30/CGR1 family.

This is an uncharacterized protein from Sulfolobus acidocaldarius (strain ATCC 33909 / DSM 639 / JCM 8929 / NBRC 15157 / NCIMB 11770).